Consider the following 417-residue polypeptide: UDP-N-acetylglucosamine 1-carboxyvinyltransferase (417 aa).

Position 22 to 23 (22 to 23) interacts with phosphoenolpyruvate; sequence KN. Position 92 (R92) interacts with UDP-N-acetyl-alpha-D-glucosamine. C116 (proton donor) is an active-site residue. C116 carries the post-translational modification 2-(S-cysteinyl)pyruvic acid O-phosphothioketal. UDP-N-acetyl-alpha-D-glucosamine-binding positions include 161–164, D305, and I327; that span reads KVSV.

Belongs to the EPSP synthase family. MurA subfamily.

The protein localises to the cytoplasm. It catalyses the reaction phosphoenolpyruvate + UDP-N-acetyl-alpha-D-glucosamine = UDP-N-acetyl-3-O-(1-carboxyvinyl)-alpha-D-glucosamine + phosphate. The protein operates within cell wall biogenesis; peptidoglycan biosynthesis. Functionally, cell wall formation. Adds enolpyruvyl to UDP-N-acetylglucosamine. This is UDP-N-acetylglucosamine 1-carboxyvinyltransferase from Pelagibacter ubique (strain HTCC1062).